Reading from the N-terminus, the 72-residue chain is MATGWVVLIAVIALLVGAAGGFFLARKYMQDYFKKNPPVNEDMLRMMMASMGQKPSEKKVRQMMQQMKNQGK.

Residues 4-26 (GWVVLIAVIALLVGAAGGFFLAR) traverse the membrane as a helical segment.

This sequence belongs to the UPF0154 family.

Its subcellular location is the membrane. The polypeptide is UPF0154 protein EF_1734 (Enterococcus faecalis (strain ATCC 700802 / V583)).